Consider the following 269-residue polypeptide: NAD kinase (269 aa).

The active-site Proton acceptor is the aspartate 62. NAD(+)-binding positions include 62 to 63 (DG), 130 to 131 (NE), lysine 141, arginine 158, aspartate 160, 171 to 176 (TAYAMS), alanine 195, and glutamine 229.

Belongs to the NAD kinase family. It depends on a divalent metal cation as a cofactor.

It localises to the cytoplasm. The catalysed reaction is NAD(+) + ATP = ADP + NADP(+) + H(+). Its function is as follows. Involved in the regulation of the intracellular balance of NAD and NADP, and is a key enzyme in the biosynthesis of NADP. Catalyzes specifically the phosphorylation on 2'-hydroxyl of the adenosine moiety of NAD to yield NADP. This Methanospirillum hungatei JF-1 (strain ATCC 27890 / DSM 864 / NBRC 100397 / JF-1) protein is NAD kinase.